Here is a 140-residue protein sequence, read N- to C-terminus: Putative pre-16S rRNA nuclease (140 aa).

It belongs to the YqgF nuclease family.

The protein localises to the cytoplasm. Could be a nuclease involved in processing of the 5'-end of pre-16S rRNA. This Yersinia enterocolitica serotype O:8 / biotype 1B (strain NCTC 13174 / 8081) protein is Putative pre-16S rRNA nuclease.